The sequence spans 315 residues: ATP synthase gamma chain (315 aa).

Belongs to the ATPase gamma chain family. In terms of assembly, F-type ATPases have 2 components, CF(1) - the catalytic core - and CF(0) - the membrane proton channel. CF(1) has five subunits: alpha(3), beta(3), gamma(1), delta(1), epsilon(1). CF(0) has three main subunits: a, b and c.

The protein resides in the cellular thylakoid membrane. Its function is as follows. Produces ATP from ADP in the presence of a proton gradient across the membrane. The gamma chain is believed to be important in regulating ATPase activity and the flow of protons through the CF(0) complex. The protein is ATP synthase gamma chain of Microcystis aeruginosa (strain NIES-843 / IAM M-2473).